Reading from the N-terminus, the 374-residue chain is 8-amino-7-oxononanoate synthase (374 aa).

2 residues coordinate substrate: R22 and R29. G109–Y110 lines the pyridoxal 5'-phosphate pocket. H134 is a binding site for substrate. Pyridoxal 5'-phosphate contacts are provided by residues S182, D207 to H210, and T227 to K230. K230 is subject to N6-(pyridoxal phosphate)lysine. A substrate-binding site is contributed by T339.

It belongs to the class-II pyridoxal-phosphate-dependent aminotransferase family. BioF subfamily. Homodimer. Requires pyridoxal 5'-phosphate as cofactor.

It carries out the reaction 6-carboxyhexanoyl-[ACP] + L-alanine + H(+) = (8S)-8-amino-7-oxononanoate + holo-[ACP] + CO2. Its pathway is cofactor biosynthesis; biotin biosynthesis. Functionally, catalyzes the decarboxylative condensation of pimeloyl-[acyl-carrier protein] and L-alanine to produce 8-amino-7-oxononanoate (AON), [acyl-carrier protein], and carbon dioxide. The protein is 8-amino-7-oxononanoate synthase of Methylobacterium radiotolerans (strain ATCC 27329 / DSM 1819 / JCM 2831 / NBRC 15690 / NCIMB 10815 / 0-1).